The following is a 354-amino-acid chain: Dihydroorotate dehydrogenase (quinone) (354 aa).

FMN contacts are provided by residues 61-65 and alanine 85; that span reads AGYDK. A substrate-binding site is contributed by lysine 65. 110–114 is a substrate binding site; that stretch reads NRFGF. Asparagine 139 and asparagine 170 together coordinate FMN. Asparagine 170 is a substrate binding site. Catalysis depends on serine 173, which acts as the Nucleophile. Asparagine 175 lines the substrate pocket. Residues lysine 211 and threonine 239 each contribute to the FMN site. Substrate is bound at residue 240–241; that stretch reads NT. FMN-binding positions include glycine 261, glycine 290, and 311 to 312; that span reads YT.

The protein belongs to the dihydroorotate dehydrogenase family. Type 2 subfamily. In terms of assembly, monomer. FMN serves as cofactor.

Its subcellular location is the cell membrane. It carries out the reaction (S)-dihydroorotate + a quinone = orotate + a quinol. The protein operates within pyrimidine metabolism; UMP biosynthesis via de novo pathway; orotate from (S)-dihydroorotate (quinone route): step 1/1. Its function is as follows. Catalyzes the conversion of dihydroorotate to orotate with quinone as electron acceptor. The polypeptide is Dihydroorotate dehydrogenase (quinone) (Cereibacter sphaeroides (strain KD131 / KCTC 12085) (Rhodobacter sphaeroides)).